We begin with the raw amino-acid sequence, 93 residues long: Protamine-3 (93 aa).

Residues 1 to 93 form a disordered region; sequence MGSRCAKLGT…QSPEPKQTRS (93 aa). Acidic residues predominate over residues 37-57; it reads EGEEEEEGEEEEEEEGEEEEL. Residues 81–93 show a composition bias toward polar residues; that stretch reads EVQQSPEPKQTRS. Serine 85 bears the Phosphoserine mark.

It belongs to the protamine P3 family.

The protein resides in the nucleus. It is found in the chromosome. Its function is as follows. Protamines substitute for histones in the chromatin of sperm during the haploid phase of spermatogenesis. They compact sperm DNA into a highly condensed, stable and inactive complex. This Bos taurus (Bovine) protein is Protamine-3 (PRM3).